Reading from the N-terminus, the 500-residue chain is Organic cation/carnitine transporter 7 (500 aa).

At 1 to 23 (MADGNTRFTVDEALVAMGFGKFQ) the chain is on the cytoplasmic side. Residues 24–44 (IYVLAYAGMGWVAEAMEMMLL) traverse the membrane as a helical segment. Over 45 to 62 (SFVGPAVQSLWNLSARQE) the chain is Extracellular. Asparagine 56 carries N-linked (GlcNAc...) asparagine glycosylation. Residues 63-83 (SLITSVVFAGMLIGAYSWGIV) traverse the membrane as a helical segment. Residues 84–97 (SDKHGRRKGFIITA) lie on the Cytoplasmic side of the membrane. The helical transmembrane segment at 98–118 (VVTFVAGFLSAFSPNYMWLII) threads the bilayer. At 119 to 120 (LR) the chain is on the extracellular side. The helical transmembrane segment at 121 to 141 (CLVGLGLGGGPVLASWYLEFI) threads the bilayer. Residue 137–144 (YLEFIPAP) participates in ATP binding. Residues 142 to 150 (PAPSRGTWM) are Cytoplasmic-facing. Residues 151-171 (VVFSAFWTVGTIFEASLAWLV) form a helical membrane-spanning segment. The Extracellular portion of the chain corresponds to 172 to 174 (MPR). A helical membrane pass occupies residues 175–195 (LGWRWLLAFSSVPSSLLLLFY). Residues 196–293 (RWTSESPRYL…ALLSPTLMKR (98 aa)) lie on the Cytoplasmic side of the membrane. A helical transmembrane segment spans residues 294–314 (TLLLWVVFFGNAFAYYGVVLL). The Extracellular portion of the chain corresponds to 315 to 341 (TTELNNSHNRCYPTEKQLRNSNDVNYR). Asparagine 319 carries an N-linked (GlcNAc...) asparagine glycan. The helical transmembrane segment at 342 to 362 (DVFIASFAEFPGLLISAAMVD) threads the bilayer. Over 363 to 367 (RLGRK) the chain is Cytoplasmic. The chain crosses the membrane as a helical span at residues 368–387 (ASMASMLFTCCIFLLPLLSH). Over 388-401 (QSPFITTVLLFGGR) the chain is Extracellular. The chain crosses the membrane as a helical span at residues 402–422 (ICISAAFTVVYIYAPEIYPTA). Residues 423–429 (VRTTGVG) are Cytoplasmic-facing. The chain crosses the membrane as a helical span at residues 430 to 450 (VGSSVGRIGGILCPLVAVGLV). At 451 to 456 (HGCHQT) the chain is on the extracellular side. A helical transmembrane segment spans residues 457–477 (IAVLLFEVVILVSGICVCLFP). The Cytoplasmic portion of the chain corresponds to 478–500 (FETSGRDLTDSISASKEPPSASV).

The protein belongs to the major facilitator (TC 2.A.1) superfamily. Organic cation transporter (TC 2.A.1.19) family. As to expression, expressed in pollen.

Its subcellular location is the membrane. Functionally, high affinity carnitine transporter involved in the active cellular uptake of carnitine. Also transports organic cations. The protein is Organic cation/carnitine transporter 7 (OCT7) of Arabidopsis thaliana (Mouse-ear cress).